Reading from the N-terminus, the 938-residue chain is Isoleucine--tRNA ligase (938 aa).

The 'HIGH' region signature appears at 58–68 (PYANGSIHIGH). Position 561 (Glu561) interacts with L-isoleucyl-5'-AMP. A 'KMSKS' region motif is present at residues 602–606 (KMSKS). An ATP-binding site is contributed by Lys605. Zn(2+) contacts are provided by Cys901, Cys904, Cys921, and Cys924.

The protein belongs to the class-I aminoacyl-tRNA synthetase family. IleS type 1 subfamily. In terms of assembly, monomer. Requires Zn(2+) as cofactor.

The protein localises to the cytoplasm. It catalyses the reaction tRNA(Ile) + L-isoleucine + ATP = L-isoleucyl-tRNA(Ile) + AMP + diphosphate. Its function is as follows. Catalyzes the attachment of isoleucine to tRNA(Ile). As IleRS can inadvertently accommodate and process structurally similar amino acids such as valine, to avoid such errors it has two additional distinct tRNA(Ile)-dependent editing activities. One activity is designated as 'pretransfer' editing and involves the hydrolysis of activated Val-AMP. The other activity is designated 'posttransfer' editing and involves deacylation of mischarged Val-tRNA(Ile). The chain is Isoleucine--tRNA ligase from Sodalis glossinidius (strain morsitans).